The primary structure comprises 166 residues: Minor capsid protein VP2 (166 aa).

Residues 138–166 form a disordered region; sequence PAPSGFVNPNYQPSPPRLKLGPRPPSTNV. Residues 149-166 are compositionally biased toward pro residues; it reads QPSPPRLKLGPRPPSTNV.

This sequence belongs to the vesivirus VP2 protein family. As to quaternary structure, homooligomer. The portal-like structure consists in 12 copies of VP2. Interacts with capsid protein VP1.

It is found in the virion. Its subcellular location is the host cytoplasm. In terms of biological role, minor structural protein that forms a portal-like structure at a unique three-fold axis of symmetry, following binding to the host receptor. The channel formed by VP2 may allow the delivery of the viral genome through the host endosomal membrane. This is Minor capsid protein VP2 from Homo sapiens (Human).